Consider the following 174-residue polypeptide: Gamma-crystallin C (174 aa).

2 Beta/gamma crystallin 'Greek key' domains span residues 2–40 (GKITFYEDRAFQGRSYETTTDCPNLQPYFSRCNSIRVES) and 41–83 (GCWM…CLIP). Residue Cys23 is modified to S-methylcysteine. Residues 84–87 (QTVS) form a connecting peptide region. Beta/gamma crystallin 'Greek key' domains follow at residues 88-128 (HRLR…HVLE) and 129-171 (GCWV…RRVV).

This sequence belongs to the beta/gamma-crystallin family. In terms of assembly, monomer.

Functionally, crystallins are the dominant structural components of the vertebrate eye lens. This is Gamma-crystallin C (CRYGC) from Homo sapiens (Human).